We begin with the raw amino-acid sequence, 105 residues long: uncharacterized protein (105 aa).

A run of 2 helical transmembrane segments spans residues 10 to 30 (YVVF…FKIG) and 48 to 68 (YPLA…YPPS).

Its subcellular location is the membrane. This is an uncharacterized protein from Acanthamoeba polyphaga mimivirus (APMV).